A 234-amino-acid chain; its full sequence is Methylamine utilization ferredoxin-type protein MauM (234 aa).

4 consecutive 4Fe-4S ferredoxin-type domains span residues 61 to 91 (ALAE…LASW), 98 to 131 (GTPF…PLLT), 140 to 176 (VAVL…LKPI), and 184 to 215 (QIPT…VLPR). 16 residues coordinate [4Fe-4S] cluster: C71, C74, C77, C81, C109, C112, C117, C121, C149, C157, C160, C164, C193, C196, C199, and C203.

Its pathway is one-carbon metabolism; methylamine degradation. Its function is as follows. Involved in electron transfer. This Methylobacillus flagellatus (strain ATCC 51484 / DSM 6875 / VKM B-1610 / KT) protein is Methylamine utilization ferredoxin-type protein MauM (mauM).